The sequence spans 371 residues: Flagellar P-ring protein (371 aa).

Residues 1 to 24 (MSIRVLLFSIFTGFLLAAAGPALA) form the signal peptide. Residues 301-321 (PQPFSSGTTATQPQTDISAQK) show a composition bias toward polar residues. A disordered region spans residues 301-322 (PQPFSSGTTATQPQTDISAQKT).

It belongs to the FlgI family. In terms of assembly, the basal body constitutes a major portion of the flagellar organelle and consists of four rings (L,P,S, and M) mounted on a central rod.

It localises to the periplasm. Its subcellular location is the bacterial flagellum basal body. Its function is as follows. Assembles around the rod to form the L-ring and probably protects the motor/basal body from shearing forces during rotation. In Allorhizobium ampelinum (strain ATCC BAA-846 / DSM 112012 / S4) (Agrobacterium vitis (strain S4)), this protein is Flagellar P-ring protein.